The chain runs to 139 residues: Chemical-damaging agent resistance protein B (139 aa).

This sequence belongs to the CAPAB/TerDEXZ family.

In terms of biological role, not known; could confer methyl methane sulfonate (MMS), mitomycin C (MC), and UV resistance. The polypeptide is Chemical-damaging agent resistance protein B (Clostridium acetobutylicum).